Reading from the N-terminus, the 343-residue chain is Oxygen-dependent coproporphyrinogen-III oxidase (343 aa).

S99 is a binding site for substrate. A divalent metal cation-binding residues include H103 and H113. H113 (proton donor) is an active-site residue. 115 to 117 provides a ligand contact to substrate; it reads NYR. A divalent metal cation is bound by residues H147 and H177. Positions 267 to 302 are important for dimerization; sequence YVEFNLVWDRGTIFGLQTNGRTESILMSLPPLARWE.

The protein belongs to the aerobic coproporphyrinogen-III oxidase family. As to quaternary structure, homodimer. A divalent metal cation serves as cofactor.

The protein localises to the cytoplasm. The catalysed reaction is coproporphyrinogen III + O2 + 2 H(+) = protoporphyrinogen IX + 2 CO2 + 2 H2O. It functions in the pathway porphyrin-containing compound metabolism; protoporphyrin-IX biosynthesis; protoporphyrinogen-IX from coproporphyrinogen-III (O2 route): step 1/1. Functionally, involved in the heme and chlorophyll biosynthesis. Catalyzes the aerobic oxidative decarboxylation of propionate groups of rings A and B of coproporphyrinogen-III to yield the vinyl groups in protoporphyrinogen-IX. This Prochlorococcus marinus (strain SARG / CCMP1375 / SS120) protein is Oxygen-dependent coproporphyrinogen-III oxidase.